Reading from the N-terminus, the 1285-residue chain is Peroxisomal ATPase PEX1 (1285 aa).

Positions 344–353 are enriched in polar residues; it reads QQGKTKQSVM. The tract at residues 344–373 is disordered; that stretch reads QQGKTKQSVMSPEKEKHPLESPNHKQIGSD. Residue Ser-354 is modified to Phosphoserine. Over residues 355 to 373 the composition is skewed to basic and acidic residues; that stretch reads PEKEKHPLESPNHKQIGSD. Residues 601–608 and 883–890 each bind ATP; these read GGKGSGKS and GPPGTGKT. Residues 1142–1161 are compositionally biased toward polar residues; the sequence is NGTSSDLSSQCPSAPSSVTQ. A disordered region spans residues 1142–1162; sequence NGTSSDLSSQCPSAPSSVTQD. Phosphoserine is present on residues Ser-1183, Ser-1211, and Ser-1213. The tract at residues 1262-1285 is disordered; it reads FQNPKKRKNPSGTVFRPGQKVTLA.

This sequence belongs to the AAA ATPase family. As to quaternary structure, homooligomer; homooligomerizes in the cytosol, interaction with PEX6 promotes dissociation of the homooligomer. Interacts with PEX6; forming the PEX1-PEX6 AAA ATPase complex, which is composed of a heterohexamer formed by a trimer of PEX1-PEX6 dimers. Interacts indirectly with PEX26, via its interaction with PEX6.

It is found in the cytoplasm. The protein resides in the cytosol. The protein localises to the peroxisome membrane. It catalyses the reaction ATP + H2O = ADP + phosphate + H(+). Functionally, component of the PEX1-PEX6 AAA ATPase complex, a protein dislocase complex that mediates the ATP-dependent extraction of the PEX5 receptor from peroxisomal membranes, an essential step for PEX5 recycling. Specifically recognizes PEX5 monoubiquitinated at 'Cys-11', and pulls it out of the peroxisome lumen through the PEX2-PEX10-PEX12 retrotranslocation channel. Extraction by the PEX1-PEX6 AAA ATPase complex is accompanied by unfolding of the TPR repeats and release of bound cargo from PEX5. This chain is Peroxisomal ATPase PEX1, found in Cricetulus griseus (Chinese hamster).